The following is a 410-amino-acid chain: Cathepsin D (410 aa).

Positions 1–18 are cleaved as a signal peptide; sequence MQPPSLLLLVLGLLAAPA. A propeptide spans 19-64 (activation peptide); sequence AALVRIPLHKFTSVRRTMTELGGPVEDLIAKGPISKYAQGAPAVTG. In terms of domain architecture, Peptidase A1 spans 79–405; the sequence is YYGEIGIGTP…DRDQNRVGLA (327 aa). Cystine bridges form between C91–C160 and C110–C117. The active site involves D97. 2 N-linked (GlcNAc...) asparagine glycosylation sites follow: N134 and N261. A disulfide bridge connects residues C284 and C288. The active site involves D293. The cysteines at positions 327 and 364 are disulfide-linked.

Belongs to the peptidase A1 family. In terms of assembly, consists of a light chain and a heavy chain. Interacts with ADAM30; this leads to activation of CTSD. Interacts with GRN; stabilizes CTSD; increases its proteolytic activity. In terms of processing, N- and O-glycosylated. Undergoes proteolytic cleavage and activation by ADAM30.

The protein resides in the lysosome. The protein localises to the melanosome. It is found in the secreted. Its subcellular location is the extracellular space. It carries out the reaction Specificity similar to, but narrower than, that of pepsin A. Does not cleave the 4-Gln-|-His-5 bond in B chain of insulin.. Functionally, acid protease active in intracellular protein breakdown. Plays a role in APP processing following cleavage and activation by ADAM30 which leads to APP degradation. The sequence is that of Cathepsin D (CTSD) from Canis lupus familiaris (Dog).